The primary structure comprises 451 residues: UPF0761 membrane protein Hhal_0704 (451 aa).

Transmembrane regions (helical) follow at residues 66-86 (LLAIVPLMTIGFSVLAAFPVF), 122-142 (ELTAVGIAGLTVTALLLLNTI), 162-182 (FMVYWTVLTMGPLLLGVSVAS), 204-224 (LLNLAPFVVQAIVFSLIYSLV), 228-248 (SVPVLHAVIGGVVASGLFELA), and 268-288 (ALAALPIFLVWLYISWLVILI).

It belongs to the UPF0761 family.

The protein resides in the cell inner membrane. This Halorhodospira halophila (strain DSM 244 / SL1) (Ectothiorhodospira halophila (strain DSM 244 / SL1)) protein is UPF0761 membrane protein Hhal_0704.